We begin with the raw amino-acid sequence, 273 residues long: Octanoyltransferase (273 aa).

The 220-residue stretch at 35 to 254 folds into the BPL/LPL catalytic domain; sequence DRVPDTCLLL…HLRDILENAE (220 aa). Residues 73 to 80, 184 to 186, and 197 to 199 contribute to the substrate site; these read RGGKITWH, AIG, and GFA. The active-site Acyl-thioester intermediate is the Cys-215.

This sequence belongs to the LipB family.

It is found in the cytoplasm. The enzyme catalyses octanoyl-[ACP] + L-lysyl-[protein] = N(6)-octanoyl-L-lysyl-[protein] + holo-[ACP] + H(+). Its pathway is protein modification; protein lipoylation via endogenous pathway; protein N(6)-(lipoyl)lysine from octanoyl-[acyl-carrier-protein]: step 1/2. Catalyzes the transfer of endogenously produced octanoic acid from octanoyl-acyl-carrier-protein onto the lipoyl domains of lipoate-dependent enzymes. Lipoyl-ACP can also act as a substrate although octanoyl-ACP is likely to be the physiological substrate. The sequence is that of Octanoyltransferase from Streptomyces griseus subsp. griseus (strain JCM 4626 / CBS 651.72 / NBRC 13350 / KCC S-0626 / ISP 5235).